Reading from the N-terminus, the 311-residue chain is Olfactory receptor 2M4 (311 aa).

Topologically, residues 1–25 (MVWENQTFNSIFILLGIFNHSPTHT) are extracellular. Residue N5 is glycosylated (N-linked (GlcNAc...) asparagine). Residues 26–49 (FLFSLVLGIFSLALMENISMVLLI) form a helical membrane-spanning segment. The Cytoplasmic segment spans residues 50–57 (YIEKQLHT). The chain crosses the membrane as a helical span at residues 58–79 (PMYFLLSQLSLMDLMLICTTLP). The Extracellular segment spans residues 80–100 (KMIFSYLSGKKSISLAGCGTQ). The cysteines at positions 97 and 189 are disulfide-linked. A helical transmembrane segment spans residues 101–120 (IFFYVSLLGAECFLLAVMAY). Over 121 to 139 (DRYVAICHPLQYTILMNPK) the chain is Cytoplasmic. Residues 140–158 (LCVFMTVASWTLGSLDGII) form a helical membrane-spanning segment. The Extracellular segment spans residues 159-195 (VLAAVLSFSYCSSLEIHHFFCDVAALLPLSCTETSAF). A helical transmembrane segment spans residues 196-219 (ERLLVICCVVMLIFPVSVIILSYS). The Cytoplasmic segment spans residues 220-236 (HVLRAVIHMGSGESRRK). The helical transmembrane segment at 237–259 (AFTTCSSHLSVVGLYYGAAMFMY) threads the bilayer. Residues 260–272 (MRPASKHTPDQDK) lie on the Extracellular side of the membrane. The chain crosses the membrane as a helical span at residues 273–292 (MVSAFYTILTPMLNPLIYSL). The Cytoplasmic segment spans residues 293-311 (RNKEVFRALQKVLKKRKLI).

Belongs to the G-protein coupled receptor 1 family.

It localises to the cell membrane. Functionally, odorant receptor. This Homo sapiens (Human) protein is Olfactory receptor 2M4 (OR2M4).